The primary structure comprises 300 residues: Cation-efflux pump FieF (300 aa).

The next 4 helical transmembrane spans lie at 12 to 32 (AAIA…FAWW), 39 to 59 (ILAA…NLLV), 82 to 102 (AALA…LTGI), and 114 to 134 (PGVG…LVTF). Zn(2+) is bound by residues Asp-45 and Asp-49. His-153 and Asp-157 together coordinate Zn(2+). Residues 164–184 (ILVALGLAWYGWHRADALFAL) form a helical membrane-spanning segment.

Belongs to the cation diffusion facilitator (CDF) transporter (TC 2.A.4) family. FieF subfamily. As to quaternary structure, homodimer.

The protein localises to the cell inner membrane. It carries out the reaction Zn(2+)(in) + H(+)(out) = Zn(2+)(out) + H(+)(in). It catalyses the reaction Cd(2+)(in) + H(+)(out) = Cd(2+)(out) + H(+)(in). The catalysed reaction is Fe(2+)(in) + H(+)(out) = Fe(2+)(out) + H(+)(in). In terms of biological role, divalent metal cation transporter which exports Zn(2+), Cd(2+) and possibly Fe(2+). May be involved in zinc and iron detoxification by efflux. In Citrobacter koseri (strain ATCC BAA-895 / CDC 4225-83 / SGSC4696), this protein is Cation-efflux pump FieF.